The following is a 382-amino-acid chain: Sphingoid long-chain base transporter RSB1 (382 aa).

The Extracellular segment spans residues 1 to 34 (MSNATNNTLGSLLPQLEAAANSNSLYGGMVPNLR). N-linked (GlcNAc...) asparagine glycosylation is found at asparagine 3 and asparagine 6. A helical transmembrane segment spans residues 35–55 (FNITMIVIWGILLTIHVVQLL). At 56-57 (MR) the chain is on the cytoplasmic side. Residues 58–78 (QYWFSIAFICTGILEVLGFIG) traverse the membrane as a helical segment. Residues 79-90 (RTWSHSNVADMD) lie on the Extracellular side of the membrane. A helical membrane pass occupies residues 91–111 (AFLLNMICLTIAPVFTMGGIY). At 112-135 (YQLAKLIEVYGHRFSLLPSPMAYS) the chain is on the cytoplasmic side. Residues 136–156 (FIFICSDIVSLVVQAVGGGLC) traverse the membrane as a helical segment. Topologically, residues 157-171 (GVAVTDGTSTTTGNH) are extracellular. Residues 172 to 192 (VFIAGLAIQVASMAIFLMLWF) traverse the membrane as a helical segment. Residues 193–241 (HFLFRIYISVRWEHINSRPISLSLLKISQTEVDYLYREKFHFLRLEPKR) are Cytoplasmic-facing. The chain crosses the membrane as a helical span at residues 242 to 262 (WVFHYFNLAITVAVLTIFTRC). The Extracellular segment spans residues 263-281 (CYRLAELVVGWDGYLITHE). Residues 282-302 (WYFIILDALMMAIATVTLTIF) form a helical membrane-spanning segment. Residues 303-382 (HPGFAFKGKS…LFSSKKKAKL (80 aa)) lie on the Cytoplasmic side of the membrane.

The protein belongs to the lipid-translocating exporter (LTE) (TC 9.A.26.1) family.

The protein resides in the cell membrane. Functionally, catalyzes the ATP-dependent translocation of sphingoid long-chain bases (LCBs) from the cytoplasmic site toward the extracytoplasmic side of the membrane (flip-flop). Involved in the establishment of the functional lipid asymmetry of the plasma membrane. Regulates intracellular levels of LCBs, sphingolipid precursors that are growth inhibitory at increased levels. In Saccharomyces cerevisiae (strain JAY291) (Baker's yeast), this protein is Sphingoid long-chain base transporter RSB1 (RSB1).